The chain runs to 287 residues: tRNA pseudouridine synthase B (287 aa).

Catalysis depends on Asp37, which acts as the Nucleophile.

This sequence belongs to the pseudouridine synthase TruB family. Type 1 subfamily.

It carries out the reaction uridine(55) in tRNA = pseudouridine(55) in tRNA. Its function is as follows. Responsible for synthesis of pseudouridine from uracil-55 in the psi GC loop of transfer RNAs. The protein is tRNA pseudouridine synthase B of Caldicellulosiruptor saccharolyticus (strain ATCC 43494 / DSM 8903 / Tp8T 6331).